We begin with the raw amino-acid sequence, 82 residues long: Delta-ctenitoxin-Pn1a (82 aa).

The N-terminal stretch at 1 to 16 (MKVAIVFLSLLVLAFA) is a signal peptide. A propeptide spanning residues 17 to 34 (SESIEENREEFPVEESAR) is cleaved from the precursor. Intrachain disulfides connect Cys-35-Cys-49, Cys-42-Cys-55, Cys-46-Cys-82, Cys-48-Cys-65, and Cys-57-Cys-63.

It belongs to the neurotoxin 03 (Tx2) family. 05 subfamily. As to expression, expressed by the venom gland.

It localises to the secreted. In terms of biological role, this neurotoxin binds at site 3 of insect voltage-activated sodium channels (Nav) and prolongs evoked axonal action potentials by a slowing down of sodium current inactivation. The toxin also inhibits glutamate uptake from rat brain synaptosomes. It reversibly inhibits the N-methyl-D-aspartate (NMDA)-subtype of ionotropic glutamate receptor (GRIN). In addition, the toxin shows antinociceptive effect in all rat pain models tested (inflammatory, neuropathic and nociceptive). The antinociceptive effect is partially blocked when selective antagonists of both mu- and delta-opioid receptors are administered, revealing that the antinociceptive effect of the toxin involves both opioid and cannabinoid endogenous systems. In vivo, it is highly toxic to house fly (Musca domestica), toxic to cockroach, but has no effect when intracerebroventricularly injected into mice. In Phoneutria nigriventer (Brazilian armed spider), this protein is Delta-ctenitoxin-Pn1a.